The chain runs to 360 residues: Peptide chain release factor 1 (360 aa).

N5-methylglutamine is present on Gln235. Residues 284 to 313 (AKRQQAEASTRRNLLGSGDRSDRNRTYNFP) form a disordered region.

Belongs to the prokaryotic/mitochondrial release factor family. Methylated by PrmC. Methylation increases the termination efficiency of RF1.

It is found in the cytoplasm. Its function is as follows. Peptide chain release factor 1 directs the termination of translation in response to the peptide chain termination codons UAG and UAA. In Escherichia coli O127:H6 (strain E2348/69 / EPEC), this protein is Peptide chain release factor 1.